Here is a 382-residue protein sequence, read N- to C-terminus: MRRTFSQLATRLLKSKDDELKSTLKYLTKGPVKLLGPLFESSEVNEQGSLLNRSRTKENNLQNHHIENILRILNSNLPEVESKKQKVAVHYDVLFSHLNSIVTQATDNKSSSSKELQGSSSEDLYDRLLLLQYVGKLTNVRQITEILLSKKFNKFDKVWEHRALFDEYQRVVISILLYYRTHDVQIRKDYEPRWLSDYSDLPFPLRRLLWRCLTSNVSEDNIRQNIIHYIKLLGANWRNNDLILIYQSLYEKSHILPDLTVLNHNKDDGFSFTQNQILLVRILRAISKCVEEEPKLVKKWLIDIVKLSIQSKIMLESPKKPSTPIMDQYKFIRSLDISIRSIHRTCQDKLIFEDLQVNLGSVLKMINEEEHELKTHLPLNLI.

The N-terminal 12 residues, 1–12 (MRRTFSQLATRL), are a transit peptide targeting the mitochondrion.

As to quaternary structure, associates with the mitochondrial ribosome.

It localises to the mitochondrion. In terms of biological role, component of MIOREX complexes, large expressome-like assemblies of ribosomes with factors involved in all the steps of post-transcriptional gene expression. The chain is MIOREX complex component 5 from Saccharomyces cerevisiae (strain ATCC 204508 / S288c) (Baker's yeast).